The sequence spans 102 residues: N(4)-acetylcytidine amidohydrolase (102 aa).

The ASCH domain occupies 6-93 (TFFSRFEQDI…IKEIYPGLDE (88 aa)). K20 functions as the Proton acceptor in the catalytic mechanism. The active-site Nucleophile is T23. E73 acts as the Proton donor in catalysis.

Belongs to the N(4)-acetylcytidine amidohydrolase family.

The enzyme catalyses N(4)-acetylcytidine + H2O = cytidine + acetate + H(+). It carries out the reaction N(4)-acetyl-2'-deoxycytidine + H2O = 2'-deoxycytidine + acetate + H(+). The catalysed reaction is N(4)-acetylcytosine + H2O = cytosine + acetate + H(+). Functionally, catalyzes the hydrolysis of N(4)-acetylcytidine (ac4C). This chain is N(4)-acetylcytidine amidohydrolase, found in Serratia proteamaculans (strain 568).